The following is a 428-amino-acid chain: Adenylosuccinate synthetase (428 aa).

GTP is bound by residues 12 to 18 (GDEGKGK) and 40 to 42 (GHT). D13 acts as the Proton acceptor in catalysis. Mg(2+) is bound by residues D13 and G40. IMP contacts are provided by residues 13–16 (DEGK), 38–41 (NAGH), T130, R144, Q225, T240, and R304. Residue H41 is the Proton donor of the active site. 300-306 (VTTGRAR) serves as a coordination point for substrate. Residues R306, 332 to 334 (KID), and 414 to 416 (SVG) contribute to the GTP site.

The protein belongs to the adenylosuccinate synthetase family. In terms of assembly, homodimer. Mg(2+) is required as a cofactor.

The protein resides in the cytoplasm. It carries out the reaction IMP + L-aspartate + GTP = N(6)-(1,2-dicarboxyethyl)-AMP + GDP + phosphate + 2 H(+). The protein operates within purine metabolism; AMP biosynthesis via de novo pathway; AMP from IMP: step 1/2. Plays an important role in the de novo pathway of purine nucleotide biosynthesis. Catalyzes the first committed step in the biosynthesis of AMP from IMP. In Clostridium botulinum (strain Okra / Type B1), this protein is Adenylosuccinate synthetase.